Here is a 138-residue protein sequence, read N- to C-terminus: Phosphoribosyl-AMP cyclohydrolase (138 aa).

Mg(2+) is bound at residue aspartate 84. Zn(2+) is bound at residue cysteine 85. Residues aspartate 86 and aspartate 88 each contribute to the Mg(2+) site. Zn(2+) is bound by residues cysteine 102 and cysteine 109.

It belongs to the PRA-CH family. As to quaternary structure, homodimer. Mg(2+) serves as cofactor. Zn(2+) is required as a cofactor.

It is found in the cytoplasm. It carries out the reaction 1-(5-phospho-beta-D-ribosyl)-5'-AMP + H2O = 1-(5-phospho-beta-D-ribosyl)-5-[(5-phospho-beta-D-ribosylamino)methylideneamino]imidazole-4-carboxamide. It participates in amino-acid biosynthesis; L-histidine biosynthesis; L-histidine from 5-phospho-alpha-D-ribose 1-diphosphate: step 3/9. Functionally, catalyzes the hydrolysis of the adenine ring of phosphoribosyl-AMP. The polypeptide is Phosphoribosyl-AMP cyclohydrolase (Burkholderia vietnamiensis (strain G4 / LMG 22486) (Burkholderia cepacia (strain R1808))).